We begin with the raw amino-acid sequence, 358 residues long: Phosphoribosylformylglycinamidine cyclo-ligase (358 aa).

Belongs to the AIR synthase family.

The protein resides in the cytoplasm. The catalysed reaction is 2-formamido-N(1)-(5-O-phospho-beta-D-ribosyl)acetamidine + ATP = 5-amino-1-(5-phospho-beta-D-ribosyl)imidazole + ADP + phosphate + H(+). Its pathway is purine metabolism; IMP biosynthesis via de novo pathway; 5-amino-1-(5-phospho-D-ribosyl)imidazole from N(2)-formyl-N(1)-(5-phospho-D-ribosyl)glycinamide: step 2/2. This is Phosphoribosylformylglycinamidine cyclo-ligase from Chromohalobacter salexigens (strain ATCC BAA-138 / DSM 3043 / CIP 106854 / NCIMB 13768 / 1H11).